A 320-amino-acid polypeptide reads, in one-letter code: MNSVGSPLLWGSFAVLITIMLLLDLSLQGRKKEQAMSFRQAAVWSVIWVSLSLLFALGLWWYCRETVGVAVANSQVMAFLTGYLLEKALAVDNVFVWLMLFSYFAIPANLQRRVLIYGVLGAIVLRTVMIFAGSWLVSQFSWILYLFGLFLLVTGVKMALVKEDDSPIGDKPFVRWLKAHIRITDNLHGERFFVKEKGLLYATPLILVLILVEISDVIFAVDSIPAIFAVTTDPFIVLTSNLFAILGLRAMYFLLAGVAEKFTMLKYGLSVILAFIGIKMLIIDFYHIPIGGSLGAVASILAVTMIINVWVNKYKATENQ.

9 helical membrane passes run 3-23, 41-61, 88-108, 114-134, 136-156, 199-219, 226-246, 271-291, and 292-312; these read SVGS…MLLL, AAVW…GLWW, ALAV…AIPA, VLIY…FAGS, LVSQ…VTGV, LLYA…DVIF, AIFA…FAIL, VILA…IPIG, and GSLG…VWVN.

It belongs to the TerC family.

Its subcellular location is the cell inner membrane. Functionally, has been proposed to be a redox modulator. In Photorhabdus laumondii subsp. laumondii (strain DSM 15139 / CIP 105565 / TT01) (Photorhabdus luminescens subsp. laumondii), this protein is Putative membrane-bound redox modulator Alx (alx).